Here is a 900-residue protein sequence, read N- to C-terminus: Translation initiation factor IF-2 (900 aa).

Residues 80–95 show a composition bias toward basic and acidic residues; that stretch reads LEEQSRKTVEKEDQLR. Disordered regions lie at residues 80-106, 149-169, and 221-268; these read LEEQ…VPGR, AVEA…DSPV, and DEFD…VDEK. The segment covering 253-262 has biased composition (basic residues); the sequence is GKKKGKKKKK. A tr-type G domain is found at 397–567; that stretch reads TRPPVVTIMG…LTEAEVRELK (171 aa). Residues 406-413 are G1; sequence GHVDHGKT. Position 406–413 (406–413) interacts with GTP; the sequence is GHVDHGKT. The G2 stretch occupies residues 431 to 435; sequence GITQH. Positions 453-456 are G3; that stretch reads DTPG. GTP contacts are provided by residues 453–457 and 507–510; these read DTPGH and NKID. The segment at 507–510 is G4; that stretch reads NKID. The segment at 543–545 is G5; that stretch reads SAK.

It belongs to the TRAFAC class translation factor GTPase superfamily. Classic translation factor GTPase family. IF-2 subfamily.

Its subcellular location is the cytoplasm. Its function is as follows. One of the essential components for the initiation of protein synthesis. Protects formylmethionyl-tRNA from spontaneous hydrolysis and promotes its binding to the 30S ribosomal subunits. Also involved in the hydrolysis of GTP during the formation of the 70S ribosomal complex. This is Translation initiation factor IF-2 from Chlorobium phaeovibrioides (strain DSM 265 / 1930) (Prosthecochloris vibrioformis (strain DSM 265)).